The following is a 681-amino-acid chain: Pentatricopeptide repeat-containing protein At2g22410, mitochondrial (681 aa).

The transit peptide at 1–32 directs the protein to the mitochondrion; it reads MNISKAKLLLLPPPLTPKLNRSLYSHSQRRTR. PPR repeat units follow at residues 117 to 151, 155 to 189, 190 to 220, 221 to 255, 256 to 290, 291 to 321, 322 to 356, 357 to 387, 388 to 422, 423 to 453, 454 to 488, 489 to 519, and 525 to 555; these read NIFS…GCCE, DHFT…RLEL, VSHV…SPVR, DLVS…GVKP, DDVT…GLRM, TIPL…LEKR, TIVS…DVVL, WNAM…NTKP, DEIT…SLSL, NVAL…IQTR, NSLT…GIAP, DEIT…MKSR, and QLKH…MPME. A type E motif region spans residues 560–635; the sequence is VWGALLFGCR…IPGCSSIEVN (76 aa). A type E(+) motif region spans residues 636–666; sequence GIVCEFIVRDKSRPESEKIYDRLHCLGRHMR.

The protein belongs to the PPR family. PCMP-E subfamily.

The protein resides in the mitochondrion. This chain is Pentatricopeptide repeat-containing protein At2g22410, mitochondrial (PCMP-E28), found in Arabidopsis thaliana (Mouse-ear cress).